The sequence spans 194 residues: Lytic chitin monooxygenase (194 aa).

Residues 1 to 28 form the signal peptide; that stretch reads MKKSLLTIVLAFSFVLGGAALAPTVSEA. Positions 29 and 114 each coordinate Cu cation. A Chitin-binding type-4 domain is found at 29-191; the sequence is HGYVASPGSR…VNAFYQAIDV (163 aa).

Cu(2+) serves as cofactor.

The protein localises to the secreted. It catalyses the reaction [(1-&gt;4)-N-acetyl-beta-D-glucosaminyl]n+m + reduced acceptor + O2 = [(1-&gt;4)-N-acetyl-beta-D-glucosaminyl]m-1-(1-&gt;4)-2-(acetylamino)-2-deoxy-D-glucono-1,5-lactone + [(1-&gt;4)-N-acetyl-beta-D-glucosaminyl]n + acceptor + H2O.. Its pathway is glycan degradation; chitin degradation. Functionally, involved in chitin degradation. Catalyzes the oxidative cleavage of glycosidic bonds in both alpha- and beta-chitin via a copper-dependent mechanism, leading to oxidized chitooligosaccharides with a dominance of even-numbered products. Acts synergistically with the chitinase EfChi18A, and combining the two enzymes leads to rapid and complete depolymerization of crystalline chitin, especially with beta-chitin as a substrate. Is likely involved in a chitin degradation pathway that allows E.faecalis V583 to grow on chitin as a carbon source. This is Lytic chitin monooxygenase from Enterococcus faecalis (strain ATCC 700802 / V583).